The chain runs to 190 residues: Ribose 1,5-bisphosphate phosphokinase PhnN (190 aa).

ATP is bound at residue 19–26 (GPSGVGKD).

Belongs to the ribose 1,5-bisphosphokinase family.

It catalyses the reaction alpha-D-ribose 1,5-bisphosphate + ATP = 5-phospho-alpha-D-ribose 1-diphosphate + ADP. The protein operates within metabolic intermediate biosynthesis; 5-phospho-alpha-D-ribose 1-diphosphate biosynthesis; 5-phospho-alpha-D-ribose 1-diphosphate from D-ribose 5-phosphate (route II): step 3/3. Catalyzes the phosphorylation of ribose 1,5-bisphosphate to 5-phospho-D-ribosyl alpha-1-diphosphate (PRPP). In Ruegeria sp. (strain TM1040) (Silicibacter sp.), this protein is Ribose 1,5-bisphosphate phosphokinase PhnN.